The primary structure comprises 288 residues: Syntaxin-1A (288 aa).

Residues 1–13 (MKDRTQELRTAKD) show a composition bias toward basic and acidic residues. The segment at 1–20 (MKDRTQELRTAKDSDDDDDV) is disordered. Residues 1–265 (MKDRTQELRT…KYQSKARRKK (265 aa)) are Cytoplasmic-facing. Phosphoserine occurs at positions 14, 64, and 95. Positions 68-109 (DEKTKEELEELMSDIKKTANKVRSKLKSIEQSIEQEEGLNRS) form a coiled coil. A Phosphoserine; by DAPK1 modification is found at serine 188. One can recognise a t-SNARE coiled-coil homology domain in the interval 192–254 (LSEIETRHSE…ERAVSDTKKA (63 aa)). Residues lysine 252, lysine 253, and lysine 256 each participate in a glycyl lysine isopeptide (Lys-Gly) (interchain with G-Cter in SUMO) cross-link. A helical; Anchor for type IV membrane protein membrane pass occupies residues 266 to 286 (IMIIICCVILGIIIASTIGGI). Residues 287–288 (FG) are Extracellular-facing.

The protein belongs to the syntaxin family. As to quaternary structure, part of the SNARE core complex containing SNAP25, VAMP2 and STX1A; this complex constitutes the basic catalytic machinery of the complex neurotransmitter release apparatus. The SNARE complex interacts with CPLX1. Interacts with STXBP1. The interaction with STXBP1 promotes assembly of the SNARE complex. Interacts (via C-terminus) with KCNB1 (via C-terminus); the interaction increases in a calcium-dependent manner and induces a pore-independent enhancement of exocytosis in neuroendocrine cells, chromaffin cells, pancreatic beta cells and from the soma of dorsal root ganglia (DRG) neurons. Interacts with SYTL4. Interacts with STXBP6. Interacts with PLCL1 (via C2 domain). Interacts with OTOF. Interacts with LGI3. Interacts (via the H3 domain) with SLC6A4 (via the N-terminus); this interaction regulates SLC4A6 channel conductance in thalamocortical neurons. Interacts with SYT6 and SYT8; the interaction is Ca(2+)-dependent. Interacts with VAMP8. Interacts with SNAP23. Interacts with VAPA and SYBU. Interacts with PRRT2. Interacts with SEPT8. Interacts with STXBP5L. Interacts with synaptotagmin-1/SYT1. Interacts with SEPTIN5; in the cerebellar cortex. Interacts with SEPTIN4; in the striatum. In terms of processing, phosphorylated by CK2. Phosphorylation at Ser-188 by DAPK1 significantly decreases its interaction with STXBP1. Post-translationally, phosphorylated by CK2. Phosphorylation at Ser-188 by DAPK1 significantly decreases its interaction with STXBP1. Sumoylated, sumoylation is required for regulation of synaptic vesicle endocytosis. In terms of tissue distribution, expressed in the striatum (at protein level). Expressed in the ileum.

Its subcellular location is the cytoplasmic vesicle. It is found in the secretory vesicle. The protein resides in the synaptic vesicle membrane. The protein localises to the synapse. It localises to the synaptosome. Its subcellular location is the cell membrane. Functionally, plays an essential role in hormone and neurotransmitter calcium-dependent exocytosis and endocytosis. Part of the SNARE (Soluble NSF Attachment Receptor) complex composed of SNAP25, STX1A and VAMP2 which mediates the fusion of synaptic vesicles with the presynaptic plasma membrane. STX1A and SNAP25 are localized on the plasma membrane while VAMP2 resides in synaptic vesicles. The pairing of the three SNAREs from the N-terminal SNARE motifs to the C-terminal anchors leads to the formation of the SNARE complex, which brings membranes into close proximity and results in final fusion. Participates in the calcium-dependent regulation of acrosomal exocytosis in sperm. Also plays an important role in the exocytosis of hormones such as insulin or glucagon-like peptide 1 (GLP-1). This is Syntaxin-1A (Stx1a) from Mus musculus (Mouse).